A 369-amino-acid chain; its full sequence is UPF0284 protein sll1500 (369 aa).

It belongs to the UPF0284 family.

This chain is UPF0284 protein sll1500, found in Synechocystis sp. (strain ATCC 27184 / PCC 6803 / Kazusa).